Consider the following 163-residue polypeptide: Transcription elongation factor GreB (163 aa).

Positions 54–76 form a coiled coil; the sequence is GKRRMREIDRRIRFLTKRLEAAV.

It belongs to the GreA/GreB family. GreB subfamily.

Functionally, necessary for efficient RNA polymerase transcription elongation past template-encoded arresting sites. The arresting sites in DNA have the property of trapping a certain fraction of elongating RNA polymerases that pass through, resulting in locked ternary complexes. Cleavage of the nascent transcript by cleavage factors such as GreA or GreB allows the resumption of elongation from the new 3'terminus. GreB releases sequences of up to 9 nucleotides in length. The sequence is that of Transcription elongation factor GreB from Neisseria meningitidis serogroup B (strain ATCC BAA-335 / MC58).